The primary structure comprises 594 residues: Glutamate decarboxylase 1 (594 aa).

Positions 1-13 are enriched in low complexity; the sequence is MASSTPSSSATSS. Positions 1-22 are disordered; sequence MASSTPSSSATSSNAGADPNTA. Ser78 carries the post-translational modification Phosphoserine. 190 to 192 provides a ligand contact to 4-aminobutanoate; it reads QLS. N6-(pyridoxal phosphate)lysine is present on Lys405. Arg567 provides a ligand contact to 4-aminobutanoate.

It belongs to the group II decarboxylase family. Homodimer. It depends on pyridoxal 5'-phosphate as a cofactor.

The catalysed reaction is L-glutamate + H(+) = 4-aminobutanoate + CO2. Its function is as follows. Catalyzes the synthesis of the inhibitory neurotransmitter gamma-aminobutyric acid (GABA) with pyridoxal 5'-phosphate as cofactor. This is Glutamate decarboxylase 1 (GAD1) from Canis lupus familiaris (Dog).